A 148-amino-acid polypeptide reads, in one-letter code: 3-dehydroquinate dehydratase (148 aa).

Tyr24 (proton acceptor) is an active-site residue. Residues Asn80, His86, and Asp93 each contribute to the substrate site. His106 functions as the Proton donor in the catalytic mechanism. Substrate-binding positions include 107–108 (IS) and Arg117.

Belongs to the type-II 3-dehydroquinase family. In terms of assembly, homododecamer.

It carries out the reaction 3-dehydroquinate = 3-dehydroshikimate + H2O. The protein operates within metabolic intermediate biosynthesis; chorismate biosynthesis; chorismate from D-erythrose 4-phosphate and phosphoenolpyruvate: step 3/7. In terms of biological role, catalyzes a trans-dehydration via an enolate intermediate. This is 3-dehydroquinate dehydratase from Acidovorax sp. (strain JS42).